Reading from the N-terminus, the 102-residue chain is Small ribosomal subunit protein uS10 (102 aa).

This sequence belongs to the universal ribosomal protein uS10 family. Part of the 30S ribosomal subunit.

Involved in the binding of tRNA to the ribosomes. This chain is Small ribosomal subunit protein uS10, found in Carboxydothermus hydrogenoformans (strain ATCC BAA-161 / DSM 6008 / Z-2901).